A 514-amino-acid chain; its full sequence is Major facilitator superfamily domain-containing protein 4A (514 aa).

5 helical membrane passes run 19–39 (LTYWSVFFSFGLCIAFLGPTL), 53–73 (ISWVFFSQQLCLLLGSALGGV), 82–102 (LWALFTSSLAISLVFAVIPFC), 107–127 (VLASVMALAGLAMGCIDTVAN), and 139–159 (AVFLQVLHFFVGFGALLSPLI). N177 is a glycosylation site (N-linked (GlcNAc...) asparagine). The next 7 membrane-spanning stretches (helical) occupy residues 221–241 (YAFWIMALINLPVPMAVLMLL), 307–327 (FFAIHITGALVLFMTDGLTGA), 347–367 (VAGYLPSLFWGFITLGRLLSI), 376–396 (ATMVFINVVGVVVTFLVLLIF), 400–420 (VVFLFVGTASLGLFLSSTFPS), 438–458 (VLVTGAGVGEMVLQMLVGSIF), and 466–486 (FLVCGVIFGCLAFTFYILLLF).

Belongs to the major facilitator superfamily.

It localises to the membrane. The sequence is that of Major facilitator superfamily domain-containing protein 4A from Homo sapiens (Human).